Consider the following 413-residue polypeptide: Gamma-glutamyl phosphate reductase (413 aa).

The protein belongs to the gamma-glutamyl phosphate reductase family.

The protein resides in the cytoplasm. It carries out the reaction L-glutamate 5-semialdehyde + phosphate + NADP(+) = L-glutamyl 5-phosphate + NADPH + H(+). The protein operates within amino-acid biosynthesis; L-proline biosynthesis; L-glutamate 5-semialdehyde from L-glutamate: step 2/2. In terms of biological role, catalyzes the NADPH-dependent reduction of L-glutamate 5-phosphate into L-glutamate 5-semialdehyde and phosphate. The product spontaneously undergoes cyclization to form 1-pyrroline-5-carboxylate. The protein is Gamma-glutamyl phosphate reductase of Thermus thermophilus (strain ATCC BAA-163 / DSM 7039 / HB27).